We begin with the raw amino-acid sequence, 486 residues long: Ribosomal RNA small subunit methyltransferase F (486 aa).

S-adenosyl-L-methionine is bound by residues 124–130 (ASAPGSK), E148, D175, and D193. C246 acts as the Nucleophile in catalysis.

Belongs to the class I-like SAM-binding methyltransferase superfamily. RsmB/NOP family.

The protein resides in the cytoplasm. The enzyme catalyses cytidine(1407) in 16S rRNA + S-adenosyl-L-methionine = 5-methylcytidine(1407) in 16S rRNA + S-adenosyl-L-homocysteine + H(+). Functionally, specifically methylates the cytosine at position 1407 (m5C1407) of 16S rRNA. This chain is Ribosomal RNA small subunit methyltransferase F, found in Shewanella baltica (strain OS185).